The chain runs to 150 residues: Large ribosomal subunit protein uL15 (150 aa).

The protein belongs to the universal ribosomal protein uL15 family. As to quaternary structure, part of the 50S ribosomal subunit.

Functionally, binds to the 23S rRNA. This Anaplasma marginale (strain Florida) protein is Large ribosomal subunit protein uL15.